The following is a 196-amino-acid chain: dTTP/UTP pyrophosphatase (196 aa).

Catalysis depends on D72, which acts as the Proton acceptor.

Belongs to the Maf family. YhdE subfamily. A divalent metal cation is required as a cofactor.

The protein localises to the cytoplasm. It catalyses the reaction dTTP + H2O = dTMP + diphosphate + H(+). The catalysed reaction is UTP + H2O = UMP + diphosphate + H(+). Nucleoside triphosphate pyrophosphatase that hydrolyzes dTTP and UTP. May have a dual role in cell division arrest and in preventing the incorporation of modified nucleotides into cellular nucleic acids. This Chlamydia caviae (strain ATCC VR-813 / DSM 19441 / 03DC25 / GPIC) (Chlamydophila caviae) protein is dTTP/UTP pyrophosphatase.